The primary structure comprises 541 residues: Cyclin-T1-4 (541 aa).

The tract at residues 277 to 366 (VSEVESSVGG…KSRSGVEAPG (90 aa)) is disordered. The span at 307 to 325 (SDNLGGSTKATQNRSNDNG) shows a compositional bias: polar residues. A compositionally biased stretch (basic and acidic residues) spans 336–354 (QKGERDTETKDSMHTESHP). Phosphoserine is present on S396. The interval 445–541 (EDDKDIQNKS…REPRRHSQER (97 aa)) is disordered. Residues 493-511 (MESPCEKQLGEGKRRHDNS) are compositionally biased toward basic and acidic residues. The span at 519-528 (KTNPGGSSHS) shows a compositional bias: polar residues. Residues 529–541 (YGDREPRRHSQER) are compositionally biased toward basic and acidic residues.

This sequence belongs to the cyclin family. Cyclin T subfamily.

This Arabidopsis thaliana (Mouse-ear cress) protein is Cyclin-T1-4 (CYCT1-4).